We begin with the raw amino-acid sequence, 217 residues long: Adenylate kinase (217 aa).

10–15 lines the ATP pocket; that stretch reads GAGKGT. An NMP region spans residues 30–59; the sequence is STGDMFRAAMKNETELGLKAKSYMDAGELV. Residues T31, R36, 57–59, 85–88, and Q92 each bind AMP; these read ELV and GFPR. Residues 126-163 are LID; that stretch reads GRRVSPTSGRTYHVIFNPPKVEGICDVDGSELIQRDDD. ATP-binding positions include R127 and 136–137; that span reads TY. Residues R160 and R171 each contribute to the AMP site. ATP is bound at residue Q199.

The protein belongs to the adenylate kinase family. As to quaternary structure, monomer.

It localises to the cytoplasm. It catalyses the reaction AMP + ATP = 2 ADP. Its pathway is purine metabolism; AMP biosynthesis via salvage pathway; AMP from ADP: step 1/1. Its function is as follows. Catalyzes the reversible transfer of the terminal phosphate group between ATP and AMP. Plays an important role in cellular energy homeostasis and in adenine nucleotide metabolism. This chain is Adenylate kinase, found in Halalkalibacterium halodurans (strain ATCC BAA-125 / DSM 18197 / FERM 7344 / JCM 9153 / C-125) (Bacillus halodurans).